We begin with the raw amino-acid sequence, 309 residues long: Probable pyridoxal 5'-phosphate synthase subunit PDX1 (309 aa).

Asp40 is a D-ribose 5-phosphate binding site. The Schiff-base intermediate with D-ribose 5-phosphate role is filled by Lys97. Gly169 serves as a coordination point for D-ribose 5-phosphate. Arg181 lines the D-glyceraldehyde 3-phosphate pocket. Residues Gly230 and 251-252 (GS) contribute to the D-ribose 5-phosphate site.

Belongs to the PdxS/SNZ family.

The catalysed reaction is aldehydo-D-ribose 5-phosphate + D-glyceraldehyde 3-phosphate + L-glutamine = pyridoxal 5'-phosphate + L-glutamate + phosphate + 3 H2O + H(+). It functions in the pathway cofactor biosynthesis; pyridoxal 5'-phosphate biosynthesis. Functionally, catalyzes the formation of pyridoxal 5'-phosphate from ribose 5-phosphate (RBP), glyceraldehyde 3-phosphate (G3P) and ammonia. The ammonia is provided by PDX2. Can also use ribulose 5-phosphate and dihydroxyacetone phosphate as substrates, resulting from enzyme-catalyzed isomerization of RBP and G3P, respectively. Also plays an indirect role in resistance to singlet oxygen-generating photosensitizers. This is Probable pyridoxal 5'-phosphate synthase subunit PDX1 (PDX1) from Hevea brasiliensis (Para rubber tree).